Here is a 265-residue protein sequence, read N- to C-terminus: Glutamate racemase (265 aa).

Residues 13 to 14 and 45 to 46 contribute to the substrate site; these read DS and YG. C77 serves as the catalytic Proton donor/acceptor. 78 to 79 provides a ligand contact to substrate; the sequence is NT. C185 acts as the Proton donor/acceptor in catalysis. 186 to 187 contributes to the substrate binding site; sequence TH.

Belongs to the aspartate/glutamate racemases family.

The enzyme catalyses L-glutamate = D-glutamate. It participates in cell wall biogenesis; peptidoglycan biosynthesis. In terms of biological role, provides the (R)-glutamate required for cell wall biosynthesis. The protein is Glutamate racemase of Vibrio cholerae serotype O1 (strain ATCC 39315 / El Tor Inaba N16961).